The following is a 570-amino-acid chain: Mitogen-activated protein kinase 11 (570 aa).

One can recognise a Protein kinase domain in the interval 26-317 (YEVLEVIGKG…AQEALADPYF (292 aa)). Residues 32 to 40 (IGKGSYGLV) and lysine 55 each bind ATP. Aspartate 152 acts as the Proton acceptor in catalysis. At threonine 188 the chain carries Phosphothreonine. Positions 188–190 (TDY) match the TXY motif. Phosphotyrosine is present on tyrosine 190.

It belongs to the protein kinase superfamily. CMGC Ser/Thr protein kinase family. MAP kinase subfamily. Dually phosphorylated on Thr-188 and Tyr-190, which activates the enzyme.

The catalysed reaction is L-seryl-[protein] + ATP = O-phospho-L-seryl-[protein] + ADP + H(+). It carries out the reaction L-threonyl-[protein] + ATP = O-phospho-L-threonyl-[protein] + ADP + H(+). Activated by threonine and tyrosine phosphorylation. This is Mitogen-activated protein kinase 11 (MPK11) from Oryza sativa subsp. japonica (Rice).